Consider the following 278-residue polypeptide: Large ribosomal subunit protein uL2 (278 aa).

2 stretches are compositionally biased toward basic residues: residues 210 to 219 (RKRWLGKRPQ) and 252 to 263 (KKSRGIKTRNSK). Residues 210-278 (RKRWLGKRPQ…LIIRHRKGNK (69 aa)) are disordered.

Belongs to the universal ribosomal protein uL2 family. Part of the 50S ribosomal subunit. Forms a bridge to the 30S subunit in the 70S ribosome.

Its function is as follows. One of the primary rRNA binding proteins. Required for association of the 30S and 50S subunits to form the 70S ribosome, for tRNA binding and peptide bond formation. It has been suggested to have peptidyltransferase activity; this is somewhat controversial. Makes several contacts with the 16S rRNA in the 70S ribosome. The polypeptide is Large ribosomal subunit protein uL2 (Lactobacillus gasseri (strain ATCC 33323 / DSM 20243 / BCRC 14619 / CIP 102991 / JCM 1131 / KCTC 3163 / NCIMB 11718 / NCTC 13722 / AM63)).